Reading from the N-terminus, the 119-residue chain is Putative phosphoethanolamine transferase YjgX (119 aa).

A run of 2 helical transmembrane segments spans residues 5–25 (VFPV…VIFW) and 94–114 (LLLS…TIPY).

The protein belongs to the phosphoethanolamine transferase family.

It localises to the cell inner membrane. This is Putative phosphoethanolamine transferase YjgX (yjgX) from Escherichia coli (strain K12).